We begin with the raw amino-acid sequence, 142 residues long: MVLSAADKTNVKGVFAKIGGQAEALGGEALARMFAAYPPTKTYFPHFDLSPGSAQVKAHGKKVASALVEAANNIDDIAGALSKLSDLHAQKLRVDPVNFKLLGHCFLVVVAIHHPSVLTPEVHASLDKFLCAVATVLTAKYR.

In terms of domain architecture, Globin spans 2 to 142 (VLSAADKTNV…VATVLTAKYR (141 aa)). Position 59 (His-59) interacts with O2. Heme b is bound at residue His-88.

This sequence belongs to the globin family. In terms of assembly, heterotetramer of two alpha chains and two beta chains. As to expression, red blood cells.

Functionally, involved in oxygen transport from the lung to the various peripheral tissues. In Apus apus (Common swift), this protein is Hemoglobin subunit alpha-A (HBAA).